Here is a 395-residue protein sequence, read N- to C-terminus: Allantoicase (395 aa).

The protein belongs to the allantoicase family.

It carries out the reaction allantoate + H2O = (S)-ureidoglycolate + urea. It participates in nitrogen metabolism; (S)-allantoin degradation; (S)-ureidoglycolate from allantoate (aminidohydrolase route): step 1/1. In terms of biological role, utilization of purines as secondary nitrogen sources, when primary sources are limiting. In Danio rerio (Zebrafish), this protein is Allantoicase (allc).